A 430-amino-acid polypeptide reads, in one-letter code: Histidine--tRNA ligase (430 aa).

The protein belongs to the class-II aminoacyl-tRNA synthetase family. As to quaternary structure, homodimer.

The protein resides in the cytoplasm. It carries out the reaction tRNA(His) + L-histidine + ATP = L-histidyl-tRNA(His) + AMP + diphosphate + H(+). The protein is Histidine--tRNA ligase of Acinetobacter baumannii (strain ATCC 17978 / DSM 105126 / CIP 53.77 / LMG 1025 / NCDC KC755 / 5377).